Reading from the N-terminus, the 563-residue chain is Arylsulfatase K (563 aa).

A signal peptide spans 1–17 (MLLLLVSVIVALALVAP). Ca(2+)-binding residues include Asp-40 and Cys-80. Catalysis depends on Cys-80, which acts as the Nucleophile. Residue Cys-80 is modified to 3-oxoalanine (Cys). The N-linked (GlcNAc...) asparagine glycan is linked to Asn-108. Residue Lys-128 participates in substrate binding. The N-linked (GlcNAc...) asparagine glycan is linked to Asn-191. His-249 is a binding site for substrate. Asn-260 carries N-linked (GlcNAc...) asparagine glycosylation. Ca(2+)-binding residues include Asp-311 and His-312. Residues Asn-373, Asn-411, and Asn-496 are each glycosylated (N-linked (GlcNAc...) asparagine).

Belongs to the sulfatase family. The cofactor is Ca(2+). Post-translationally, the conversion to 3-oxoalanine (also known as C-formylglycine, FGly), of a serine or cysteine residue in prokaryotes and of a cysteine residue in eukaryotes, is critical for catalytic activity. The 75-kDa precursor undergoes proteolytic processing to yield a 23 kDa form. In terms of processing, N-glycosylated with both high mannose and complex type sugars.

It localises to the secreted. Its subcellular location is the lysosome. The catalysed reaction is an aryl sulfate + H2O = a phenol + sulfate + H(+). It catalyses the reaction Hydrolysis of the 2-sulfate groups of the 2-O-sulfo-D-glucuronate residues of chondroitin sulfate, heparin and heparitin sulfate.. Catalyzes the hydrolysis of pseudosubstrates such as p-nitrocatechol sulfate and p-nitrophenyl sulfate. Catalyzes the hydrolysis of the 2-sulfate groups of the 2-O-sulfo-D-glucuronate residues of chondroitin sulfate, heparin and heparitin sulfate. Acts selectively on 2-sulfoglucuronate and lacks activity against 2-sulfoiduronate. This Rattus norvegicus (Rat) protein is Arylsulfatase K (Arsk).